A 446-amino-acid polypeptide reads, in one-letter code: Probable glycine dehydrogenase (decarboxylating) subunit 1 (446 aa).

This sequence belongs to the GcvP family. N-terminal subunit subfamily. The glycine cleavage system is composed of four proteins: P, T, L and H. In this organism, the P 'protein' is a heterodimer of two subunits.

The catalysed reaction is N(6)-[(R)-lipoyl]-L-lysyl-[glycine-cleavage complex H protein] + glycine + H(+) = N(6)-[(R)-S(8)-aminomethyldihydrolipoyl]-L-lysyl-[glycine-cleavage complex H protein] + CO2. Its function is as follows. The glycine cleavage system catalyzes the degradation of glycine. The P protein binds the alpha-amino group of glycine through its pyridoxal phosphate cofactor; CO(2) is released and the remaining methylamine moiety is then transferred to the lipoamide cofactor of the H protein. The polypeptide is Probable glycine dehydrogenase (decarboxylating) subunit 1 (Desulforamulus reducens (strain ATCC BAA-1160 / DSM 100696 / MI-1) (Desulfotomaculum reducens)).